A 129-amino-acid chain; its full sequence is D-ribose pyranase 2 (129 aa).

The Proton donor role is filled by H20. Substrate contacts are provided by residues D28, H96, and 118-120 (YAN).

This sequence belongs to the RbsD / FucU family. RbsD subfamily. Homodecamer.

It localises to the cytoplasm. It carries out the reaction beta-D-ribopyranose = beta-D-ribofuranose. It participates in carbohydrate metabolism; D-ribose degradation; D-ribose 5-phosphate from beta-D-ribopyranose: step 1/2. Functionally, catalyzes the interconversion of beta-pyran and beta-furan forms of D-ribose. The sequence is that of D-ribose pyranase 2 from Streptomyces griseus subsp. griseus (strain JCM 4626 / CBS 651.72 / NBRC 13350 / KCC S-0626 / ISP 5235).